A 703-amino-acid chain; its full sequence is Elongation factor G (703 aa).

In terms of domain architecture, tr-type G spans 9–292 (ERTRNIGIMA…AVVDYLPGPL (284 aa)). GTP-binding positions include 18–25 (AHIDAGKT), 91–95 (DTPGH), and 145–148 (NKMD).

Belongs to the TRAFAC class translation factor GTPase superfamily. Classic translation factor GTPase family. EF-G/EF-2 subfamily.

The protein resides in the cytoplasm. In terms of biological role, catalyzes the GTP-dependent ribosomal translocation step during translation elongation. During this step, the ribosome changes from the pre-translocational (PRE) to the post-translocational (POST) state as the newly formed A-site-bound peptidyl-tRNA and P-site-bound deacylated tRNA move to the P and E sites, respectively. Catalyzes the coordinated movement of the two tRNA molecules, the mRNA and conformational changes in the ribosome. This chain is Elongation factor G, found in Leuconostoc mesenteroides subsp. mesenteroides (strain ATCC 8293 / DSM 20343 / BCRC 11652 / CCM 1803 / JCM 6124 / NCDO 523 / NBRC 100496 / NCIMB 8023 / NCTC 12954 / NRRL B-1118 / 37Y).